Consider the following 126-residue polypeptide: Small ribosomal subunit protein uS12 (126 aa).

The disordered stretch occupies residues 1-28; the sequence is MPTINQLVRKGRQSETTKSKSPALQDCP. At D89 the chain carries 3-methylthioaspartic acid. The interval 103–126 is disordered; it reads DTQGVKDRKQARSKYGAKRAKAAK. The span at 113 to 126 shows a compositional bias: basic residues; it reads ARSKYGAKRAKAAK.

Belongs to the universal ribosomal protein uS12 family. As to quaternary structure, part of the 30S ribosomal subunit. Contacts proteins S8 and S17. May interact with IF1 in the 30S initiation complex.

In terms of biological role, with S4 and S5 plays an important role in translational accuracy. Interacts with and stabilizes bases of the 16S rRNA that are involved in tRNA selection in the A site and with the mRNA backbone. Located at the interface of the 30S and 50S subunits, it traverses the body of the 30S subunit contacting proteins on the other side and probably holding the rRNA structure together. The combined cluster of proteins S8, S12 and S17 appears to hold together the shoulder and platform of the 30S subunit. This is Small ribosomal subunit protein uS12 from Burkholderia orbicola (strain MC0-3).